We begin with the raw amino-acid sequence, 197 residues long: Putative RNA-binding protein EEED8.12 (197 aa).

The 78-residue stretch at 61-138 (KSVFIGNVDF…RPIVVTAKRT (78 aa)) folds into the RRM domain. The segment at 142–166 (GMGHGVRGSSRGTFGRGRGAARGAP) is disordered.

This is Putative RNA-binding protein EEED8.12 from Caenorhabditis elegans.